Consider the following 326-residue polypeptide: Protein-ribulosamine 3-kinase, chloroplastic (326 aa).

A chloroplast-targeting transit peptide spans 1 to 30; the sequence is MAVASLSICFSARPHLLLRNFSPRPKFVAM. An ATP-binding site is contributed by 125-127; sequence EFI. The active-site Proton acceptor is D230.

This sequence belongs to the fructosamine kinase family.

The protein resides in the plastid. It localises to the chloroplast. The enzyme catalyses N(6)-D-ribulosyl-L-lysyl-[protein] + ATP = N(6)-(3-O-phospho-D-ribulosyl)-L-lysyl-[protein] + ADP + H(+). It carries out the reaction N(6)-(D-erythrulosyl)-L-lysyl-[protein] + ATP = N(6)-(3-O-phospho-D-erythrulosyl)-L-lysyl-[protein] + ADP + H(+). Its function is as follows. Initiates a process leading to the deglycation of proteins. Phosphorylates low-molecular-mass and protein-bound erythrulosamines and ribulosamines, but not fructosamines or psicosamines, on the third carbon of the sugar moiety. Protein-bound erythrulosamine 3-phosphates and ribulosamine 3-phosphates are unstable and decompose under physiological conditions. This Arabidopsis thaliana (Mouse-ear cress) protein is Protein-ribulosamine 3-kinase, chloroplastic.